A 36-amino-acid chain; its full sequence is Turgencin-A (36 aa).

Cystine bridges form between Cys8–Cys33, Cys12–Cys29, and Cys17–Cys26. Met10 is modified (methionine sulfoxide). Valine amide is present on Val36.

Its subcellular location is the secreted. In terms of biological role, has antimicrobial activity against Gram-positive bacteria (C.glutamicum ATCC 13032 (MIC=0.4 uM), B.subtilis ATCC 23857 (MIC=0.4 uM) and S.aureus ATCC 9144 (MIC=6.3 uM)) and Gram-negative bacteria (E.coli ATCC 25922 (MIC=0.8 uM) and P.aeruginosa ATCC 27853 (MIC=1.6 uM)). This is Turgencin-A from Synoicum turgens (Colonial ascidian).